The following is a 158-amino-acid chain: Endoribonuclease YbeY (158 aa).

Positions 119, 123, and 129 each coordinate Zn(2+).

The protein belongs to the endoribonuclease YbeY family. Zn(2+) is required as a cofactor.

Its subcellular location is the cytoplasm. Single strand-specific metallo-endoribonuclease involved in late-stage 70S ribosome quality control and in maturation of the 3' terminus of the 16S rRNA. This Chlamydia pneumoniae (Chlamydophila pneumoniae) protein is Endoribonuclease YbeY.